The following is a 421-amino-acid chain: Enolase (421 aa).

E207 (proton donor) is an active-site residue. Positions 244, 285, and 312 each coordinate Mg(2+). Catalysis depends on K337, which acts as the Proton acceptor. 4 residues coordinate (2R)-2-phosphoglycerate: K337, R366, S367, and K388.

This sequence belongs to the enolase family. Mg(2+) is required as a cofactor.

The protein localises to the cytoplasm. It is found in the secreted. Its subcellular location is the cell surface. The enzyme catalyses (2R)-2-phosphoglycerate = phosphoenolpyruvate + H2O. It functions in the pathway carbohydrate degradation; glycolysis; pyruvate from D-glyceraldehyde 3-phosphate: step 4/5. In terms of biological role, catalyzes the reversible conversion of 2-phosphoglycerate (2-PG) into phosphoenolpyruvate (PEP). It is essential for the degradation of carbohydrates via glycolysis. The sequence is that of Enolase from Ehrlichia ruminantium (strain Gardel).